A 544-amino-acid polypeptide reads, in one-letter code: Secreted aspartic protease 9 (544 aa).

The first 17 residues, Met-1–Ala-17, serve as a signal peptide directing secretion. A disordered region spans residues Gly-31–Arg-50. One can recognise a Peptidase A1 domain in the interval Tyr-65–Ala-479. Position 83 to 85 (Asp-83 to Gly-85) interacts with pepstatin A. An intrachain disulfide couples Cys-98 to Cys-195. Thr-167 is an active-site residue. N-linked (GlcNAc...) asparagine glycans are attached at residues Asn-212, Asn-240, and Asn-252. Asp-371 is a catalytic residue. Position 371-375 (Asp-371–Thr-375) interacts with pepstatin A. Cys-406 and Cys-441 form a disulfide bridge. Residues Asn-422 and Asn-499 are each glycosylated (N-linked (GlcNAc...) asparagine). A disordered region spans residues Ser-500–Ser-520.

It belongs to the peptidase A1 family. In terms of assembly, monomer. The GPI-anchor is attached to the protein in the endoplasmic reticulum and serves to target the protein to the cell surface. There, the glucosamine-inositol phospholipid moiety is cleaved off and the GPI-modified mannoprotein is covalently attached via its lipidless GPI glycan remnant to the 1,6-beta-glucan of the outer cell wall layer.

It is found in the cell membrane. The protein localises to the secreted. It localises to the cell wall. It catalyses the reaction Preferential cleavage at the carboxyl of hydrophobic amino acids, but fails to cleave 15-Leu-|-Tyr-16, 16-Tyr-|-Leu-17 and 24-Phe-|-Phe-25 of insulin B chain. Activates trypsinogen, and degrades keratin.. Functionally, secreted aspartic peptidases (SAPs) are a group of ten acidic hydrolases considered as key virulence factors. These enzymes supply the fungus with nutrient amino acids as well as are able to degrade the selected host's proteins involved in the immune defense. Moreover, acts toward human hemoglobin though limited proteolysis to generate a variety of antimicrobial hemocidins, enabling to compete with the other microorganisms of the same physiological niche using the microbicidal peptides generated from the host protein. Its function is as follows. Plays a key role in defense against host by cleaving histatin-5 (Hst 5), a peptide from human saliva that carries out fungicidal activity. The cleavage rate decreases in an order of SAP2 &gt; SAP9 &gt; SAP3 &gt; SAP7 &gt; SAP4 &gt; SAP1 &gt; SAP8. The first cleavage occurs between residues 'Lys-17' and 'His-18' of Hst 5, giving DSHAKRHHGYKRKFHEK and HHSHRGY peptides. Simultaneously, the DSHAKRHHGYKRK peptide is also formed. Further fragmentation by SAP9 results in FHEK product. This Candida albicans (Yeast) protein is Secreted aspartic protease 9.